We begin with the raw amino-acid sequence, 105 residues long: Intermembrane phospholipid transport system binding protein MlaB (105 aa).

The STAS domain occupies 4 to 105 (WDLQKNNDKI…GLSDWIANFI (102 aa)).

The complex is composed of two ATP-binding proteins (MlaF), two transmembrane proteins (MlaE), two cytoplasmic solute-binding proteins (MlaB) and six periplasmic solute-binding proteins (MlaD).

The protein resides in the cytoplasm. In terms of biological role, part of the ABC transporter complex MlaFEDB, which is involved in a phospholipid transport pathway that maintains lipid asymmetry in the outer membrane by retrograde trafficking of phospholipids from the outer membrane to the inner membrane. MlaB plays critical roles in both the assembly and activity of the complex. May act by modulating MlaF structure and stability. This is Intermembrane phospholipid transport system binding protein MlaB from Haemophilus influenzae (strain ATCC 51907 / DSM 11121 / KW20 / Rd).